We begin with the raw amino-acid sequence, 314 residues long: Zinc transporter ZIP3 (314 aa).

Topologically, residues 1–3 (MVK) are extracellular. The chain crosses the membrane as a helical span at residues 4–24 (LLVAKILCMVGVFFFMLLGSL). Residues 25–42 (LPVKIIETDFEKAHRSKK) are Cytoplasmic-facing. The chain crosses the membrane as a helical span at residues 43–63 (ILSLCNTFGGGVFLATCFNAL). Topologically, residues 64-85 (LPAVREKLQKVLSLGHISTDYP) are extracellular. A helical transmembrane segment spans residues 86 to 106 (LAETILLLGFFMTVFLEQLIL). At 107-169 (TFRKEKPSFI…QGLSRASPVR (63 aa)) the chain is on the cytoplasmic side. A phosphoserine mark is found at S125 and S129. A helical transmembrane segment spans residues 170 to 190 (LLSLAFALSAHSVFEGLALGL). Residues 191–196 (QEEGEK) are Extracellular-facing. The chain crosses the membrane as a helical span at residues 197–217 (VVSLFVGVAVHETLVAVALGI). Residues 218 to 229 (SMARSAMPLRDA) are Cytoplasmic-facing. The helical transmembrane segment at 230–250 (AKLAVTVSAMIPLGIGLGLGI) threads the bilayer. Topologically, residues 251–262 (ESAQGVPGSVAS) are extracellular. The helical transmembrane segment at 263–283 (VLLQGLAGGTFLFITFLEILA) threads the bilayer. Residues 284–292 (KELEEKSDR) lie on the Cytoplasmic side of the membrane. The chain crosses the membrane as a helical span at residues 293-313 (LLKVLFLVLGYTVLAGMVFLK). W314 is a topological domain (extracellular).

Belongs to the ZIP transporter (TC 2.A.5) family.

It is found in the cell membrane. It localises to the apical cell membrane. It carries out the reaction Zn(2+)(in) = Zn(2+)(out). Its function is as follows. Transporter for the divalent cation Zn(2+). Mediates the influx of Zn(2+) into cells from extracellular space. Controls Zn(2+) accumulation into dentate gyrus granule cells in the hippocampus. Mediates Zn(2+) reuptake from the secreted milk within the alveolar lumen. This Homo sapiens (Human) protein is Zinc transporter ZIP3.